We begin with the raw amino-acid sequence, 310 residues long: Oxygen-dependent coproporphyrinogen-III oxidase (310 aa).

Ser97 provides a ligand contact to substrate. A divalent metal cation contacts are provided by His101 and His111. The active-site Proton donor is the His111. 113–115 is a substrate binding site; the sequence is NFR. A divalent metal cation is bound by residues His150 and His180. An important for dimerization region spans residues 245–280; that stretch reads YVEFNLLYDRGTRFGLEFGGRTESILMSLPPRVVWR. 263–265 lines the substrate pocket; sequence GGR.

Belongs to the aerobic coproporphyrinogen-III oxidase family. In terms of assembly, homodimer. Requires a divalent metal cation as cofactor.

The protein localises to the cytoplasm. The catalysed reaction is coproporphyrinogen III + O2 + 2 H(+) = protoporphyrinogen IX + 2 CO2 + 2 H2O. The protein operates within porphyrin-containing compound metabolism; protoporphyrin-IX biosynthesis; protoporphyrinogen-IX from coproporphyrinogen-III (O2 route): step 1/1. Functionally, involved in the heme biosynthesis. Catalyzes the aerobic oxidative decarboxylation of propionate groups of rings A and B of coproporphyrinogen-III to yield the vinyl groups in protoporphyrinogen-IX. This is Oxygen-dependent coproporphyrinogen-III oxidase from Coxiella burnetii (strain Dugway 5J108-111).